The chain runs to 209 residues: MTQPNTQTTPNDVPAAAEGQQEQQQQQRRGGGRERRGGGRRGDRRGQERDSEWQERVVQIRRVSKTVKGGKKMSFRAIVVVGNERGQVGVGVGKAGDVIGAVRKGVADGKKHLVKVPLTRHNSIPTLSNGRDGAANVLIRPAAPGTGVIAGGSIRTVLELAGIKNVLAKRLGSKTPLNNARAAMVALASLRTHKETAKERGISLEQIYS.

Polar residues predominate over residues 1–11 (MTQPNTQTTPN). The interval 1-55 (MTQPNTQTTPNDVPAAAEGQQEQQQQQRRGGGRERRGGGRRGDRRGQERDSEWQE) is disordered. A compositionally biased stretch (low complexity) spans 18-28 (EGQQEQQQQQR). The span at 31 to 55 (GGRERRGGGRRGDRRGQERDSEWQE) shows a compositional bias: basic and acidic residues. Residues 53-116 (WQERVVQIRR…ADGKKHLVKV (64 aa)) form the S5 DRBM domain.

It belongs to the universal ribosomal protein uS5 family. Part of the 30S ribosomal subunit. Contacts proteins S4 and S8.

Functionally, with S4 and S12 plays an important role in translational accuracy. In terms of biological role, located at the back of the 30S subunit body where it stabilizes the conformation of the head with respect to the body. This is Small ribosomal subunit protein uS5 from Prochlorococcus marinus (strain MIT 9313).